A 189-amino-acid chain; its full sequence is Photosystem I assembly protein Ycf4 (189 aa).

Helical transmembrane passes span 31–51 (TVILVGASGFFLVGISSYFGF) and 70–90 (VMSFYGVAGILLSVYLWLTII).

It belongs to the Ycf4 family.

It localises to the plastid. The protein localises to the chloroplast thylakoid membrane. In terms of biological role, seems to be required for the assembly of the photosystem I complex. This chain is Photosystem I assembly protein Ycf4, found in Chlorokybus atmophyticus (Soil alga).